The chain runs to 198 residues: NADH-quinone oxidoreductase subunit I (198 aa).

4Fe-4S ferredoxin-type domains are found at residues 42–72 (LNRW…VEGA) and 88–117 (RVYE…MTND). [4Fe-4S] cluster is bound by residues Cys52, Cys55, Cys58, Cys62, Cys97, Cys100, Cys103, and Cys107. Positions 137 to 198 (APLKEGMEQP…DTQHKDEEAA (62 aa)) are disordered. The span at 182–198 (AHRDDDNDTQHKDEEAA) shows a compositional bias: basic and acidic residues.

The protein belongs to the complex I 23 kDa subunit family. As to quaternary structure, NDH-1 is composed of 14 different subunits. Subunits NuoA, H, J, K, L, M, N constitute the membrane sector of the complex. The cofactor is [4Fe-4S] cluster.

It localises to the cell membrane. The enzyme catalyses a quinone + NADH + 5 H(+)(in) = a quinol + NAD(+) + 4 H(+)(out). Functionally, NDH-1 shuttles electrons from NADH, via FMN and iron-sulfur (Fe-S) centers, to quinones in the respiratory chain. The immediate electron acceptor for the enzyme in this species is believed to be ubiquinone. Couples the redox reaction to proton translocation (for every two electrons transferred, four hydrogen ions are translocated across the cytoplasmic membrane), and thus conserves the redox energy in a proton gradient. This Cutibacterium acnes (strain DSM 16379 / KPA171202) (Propionibacterium acnes) protein is NADH-quinone oxidoreductase subunit I.